The primary structure comprises 86 residues: MAHKKGVGSSKNGRESESKRLGVKIYGGQAAIAGNIIVRQRGSKHNPGENVYISKDHTLHARVAGVVKFQKKRDNKSYVSIIPFEA.

Belongs to the bacterial ribosomal protein bL27 family.

The sequence is that of Large ribosomal subunit protein bL27 from Flavobacterium johnsoniae (strain ATCC 17061 / DSM 2064 / JCM 8514 / BCRC 14874 / CCUG 350202 / NBRC 14942 / NCIMB 11054 / UW101) (Cytophaga johnsonae).